We begin with the raw amino-acid sequence, 139 residues long: Putative nickel-responsive regulator (139 aa).

Residues H79, H90, H92, and C98 each coordinate Ni(2+).

The protein belongs to the transcriptional regulatory CopG/NikR family. It depends on Ni(2+) as a cofactor.

In terms of biological role, transcriptional regulator. This is Putative nickel-responsive regulator from Anaeromyxobacter sp. (strain K).